A 272-amino-acid polypeptide reads, in one-letter code: NADPH-dependent aldehyde reductase 2, chloroplastic (272 aa).

The N-terminal 53 residues, 1 to 53, are a transit peptide targeting the chloroplast; it reads MAAASSVSSPPLCLAGRVAIVTGSSRGIGRAIAIHLAELGARVVVNYSTSPVE. Residue 26 to 50 coordinates NADP(+); it reads RGIGRAIAIHLAELGARVVVNYSTS. S165 serves as a coordination point for substrate. The active-site Proton acceptor is the Y179.

Belongs to the short-chain dehydrogenases/reductases (SDR) family.

The protein localises to the plastid. It localises to the chloroplast. Its function is as follows. Aldehyde reductase that catalyzes the reduction of the aldehyde carbonyl groups on saturated and alpha,beta-unsaturated aldehydes with more than 5 carbons. No activity on alpha,beta-unsaturated ketones. Can use propionaldehyde, butyraldehyde, methylglyoxal, (e)-2-pentenal, (E)-2-hexenal, (Z)-3-hexenal and (E)-2-nonenal as substrates, but not propenal (acrolein), crotonaldehyde, 2-butanone, 3-buten-2-one or 1-penten-3-one. The sequence is that of NADPH-dependent aldehyde reductase 2, chloroplastic from Arabidopsis thaliana (Mouse-ear cress).